The chain runs to 123 residues: MPTINQLIRKPREAQKARDKAPALQSSPQKRGVCTRVYTTTPKKPNSALRKVAKVRLTNSYEVIGYIPGEGHNLQEHSVVMIRGGRVKDLPGVRYHILRGVLDTQGVKNRKQRRSKYGAKRPK.

A disordered region spans residues 1–32; sequence MPTINQLIRKPREAQKARDKAPALQSSPQKRG. A compositionally biased stretch (basic and acidic residues) spans 10 to 21; that stretch reads KPREAQKARDKA. The residue at position 89 (D89) is a 3-methylthioaspartic acid.

The protein belongs to the universal ribosomal protein uS12 family. In terms of assembly, part of the 30S ribosomal subunit. Contacts proteins S8 and S17. May interact with IF1 in the 30S initiation complex.

With S4 and S5 plays an important role in translational accuracy. Functionally, interacts with and stabilizes bases of the 16S rRNA that are involved in tRNA selection in the A site and with the mRNA backbone. Located at the interface of the 30S and 50S subunits, it traverses the body of the 30S subunit contacting proteins on the other side and probably holding the rRNA structure together. The combined cluster of proteins S8, S12 and S17 appears to hold together the shoulder and platform of the 30S subunit. This is Small ribosomal subunit protein uS12 from Azorhizobium caulinodans (strain ATCC 43989 / DSM 5975 / JCM 20966 / LMG 6465 / NBRC 14845 / NCIMB 13405 / ORS 571).